The primary structure comprises 228 residues: uncharacterized protein (228 aa).

The next 5 helical transmembrane spans lie at 14–34, 42–62, 130–150, 156–176, and 192–212; these read HTIS…MLLA, VALF…AITL, FMFS…LVGS, FSFD…VLFM, and IAIA…LIAL.

This sequence belongs to the AzlC family.

Its subcellular location is the cell membrane. This is an uncharacterized protein from Helicobacter pylori (strain J99 / ATCC 700824) (Campylobacter pylori J99).